Here is a 278-residue protein sequence, read N- to C-terminus: 4-hydroxy-tetrahydrodipicolinate reductase (278 aa).

NAD(+) contacts are provided by residues G13–M18 and G111–T113. H167 acts as the Proton donor/acceptor in catalysis. H168 contacts (S)-2,3,4,5-tetrahydrodipicolinate. The active-site Proton donor is K171. Residue G177–T178 participates in (S)-2,3,4,5-tetrahydrodipicolinate binding.

It belongs to the DapB family.

It localises to the cytoplasm. It carries out the reaction (S)-2,3,4,5-tetrahydrodipicolinate + NAD(+) + H2O = (2S,4S)-4-hydroxy-2,3,4,5-tetrahydrodipicolinate + NADH + H(+). The enzyme catalyses (S)-2,3,4,5-tetrahydrodipicolinate + NADP(+) + H2O = (2S,4S)-4-hydroxy-2,3,4,5-tetrahydrodipicolinate + NADPH + H(+). It participates in amino-acid biosynthesis; L-lysine biosynthesis via DAP pathway; (S)-tetrahydrodipicolinate from L-aspartate: step 4/4. Its function is as follows. Catalyzes the conversion of 4-hydroxy-tetrahydrodipicolinate (HTPA) to tetrahydrodipicolinate. The chain is 4-hydroxy-tetrahydrodipicolinate reductase from Mastigocladus laminosus (Fischerella sp.).